Here is a 282-residue protein sequence, read N- to C-terminus: Pantothenate synthetase (282 aa).

30–37 (MGALHAGH) contacts ATP. Residue H37 is the Proton donor of the active site. Q61 is a (R)-pantoate binding site. Q61 contributes to the beta-alanine binding site. Residue 147–150 (GEKD) participates in ATP binding. Q153 serves as a coordination point for (R)-pantoate. Residues V176 and 184-187 (LSSR) each bind ATP.

This sequence belongs to the pantothenate synthetase family. As to quaternary structure, homodimer.

The protein resides in the cytoplasm. The enzyme catalyses (R)-pantoate + beta-alanine + ATP = (R)-pantothenate + AMP + diphosphate + H(+). It functions in the pathway cofactor biosynthesis; (R)-pantothenate biosynthesis; (R)-pantothenate from (R)-pantoate and beta-alanine: step 1/1. Catalyzes the condensation of pantoate with beta-alanine in an ATP-dependent reaction via a pantoyl-adenylate intermediate. This Bacteroides fragilis (strain YCH46) protein is Pantothenate synthetase.